The chain runs to 456 residues: UDP-N-acetylglucosamine 1-carboxyvinyltransferase (456 aa).

34-35 is a binding site for phosphoenolpyruvate; it reads KN. Arg104 contributes to the UDP-N-acetyl-alpha-D-glucosamine binding site. The active-site Proton donor is the Cys128. A 2-(S-cysteinyl)pyruvic acid O-phosphothioketal modification is found at Cys128. Residues Asp319 and Ile341 each coordinate UDP-N-acetyl-alpha-D-glucosamine.

It belongs to the EPSP synthase family. MurA subfamily.

Its subcellular location is the cytoplasm. It carries out the reaction phosphoenolpyruvate + UDP-N-acetyl-alpha-D-glucosamine = UDP-N-acetyl-3-O-(1-carboxyvinyl)-alpha-D-glucosamine + phosphate. It participates in cell wall biogenesis; peptidoglycan biosynthesis. Functionally, cell wall formation. Adds enolpyruvyl to UDP-N-acetylglucosamine. The polypeptide is UDP-N-acetylglucosamine 1-carboxyvinyltransferase (Prochlorococcus marinus (strain AS9601)).